The primary structure comprises 124 residues: Large ribosomal subunit protein uL22 (124 aa).

The protein belongs to the universal ribosomal protein uL22 family. As to quaternary structure, part of the 50S ribosomal subunit.

In terms of biological role, this protein binds specifically to 23S rRNA; its binding is stimulated by other ribosomal proteins, e.g. L4, L17, and L20. It is important during the early stages of 50S assembly. It makes multiple contacts with different domains of the 23S rRNA in the assembled 50S subunit and ribosome. The globular domain of the protein is located near the polypeptide exit tunnel on the outside of the subunit, while an extended beta-hairpin is found that lines the wall of the exit tunnel in the center of the 70S ribosome. The chain is Large ribosomal subunit protein uL22 from Buchnera aphidicola subsp. Cinara cedri (strain Cc).